The following is a 590-amino-acid chain: Aspartate--tRNA(Asp/Asn) ligase (590 aa).

Glu176 serves as a coordination point for L-aspartate. Positions 200–203 (QLFK) are aspartate. Residues Arg222 and His451 each contribute to the L-aspartate site. Residue 222–224 (RDE) participates in ATP binding. ATP is bound at residue Glu485. Arg492 contacts L-aspartate. 537–540 (GIDR) contributes to the ATP binding site.

The protein belongs to the class-II aminoacyl-tRNA synthetase family. Type 1 subfamily. In terms of assembly, homodimer.

The protein localises to the cytoplasm. The enzyme catalyses tRNA(Asx) + L-aspartate + ATP = L-aspartyl-tRNA(Asx) + AMP + diphosphate. In terms of biological role, aspartyl-tRNA synthetase with relaxed tRNA specificity since it is able to aspartylate not only its cognate tRNA(Asp) but also tRNA(Asn). Reaction proceeds in two steps: L-aspartate is first activated by ATP to form Asp-AMP and then transferred to the acceptor end of tRNA(Asp/Asn). The sequence is that of Aspartate--tRNA(Asp/Asn) ligase from Ehrlichia ruminantium (strain Welgevonden).